Here is a 349-residue protein sequence, read N- to C-terminus: D-alanine--D-alanine ligase (349 aa).

The ATP-grasp domain maps to 132-335; that stretch reads KHVFEAVGVP…YSDLIEKLVD (204 aa). 162–217 contributes to the ATP binding site; the sequence is VEKLDFPVFVKPANMGSSVGISKVDDLADLQPALSEAYKYDNRVVIEQGVDAREIE. Residues D289, E302, and N304 each contribute to the Mg(2+) site.

This sequence belongs to the D-alanine--D-alanine ligase family. Mg(2+) serves as cofactor. It depends on Mn(2+) as a cofactor.

It is found in the cytoplasm. The enzyme catalyses 2 D-alanine + ATP = D-alanyl-D-alanine + ADP + phosphate + H(+). Its pathway is cell wall biogenesis; peptidoglycan biosynthesis. Functionally, cell wall formation. In Lactococcus lactis subsp. cremoris (strain MG1363), this protein is D-alanine--D-alanine ligase.